The chain runs to 328 residues: Cell division protein ZipA (328 aa).

Over 1-4 (MDLN) the chain is Periplasmic. A helical membrane pass occupies residues 5-25 (TILIIVGIVALVALIVHGLWS). The Cytoplasmic segment spans residues 26–328 (NRREKSKYFD…NAEQAYLARV (303 aa)). The disordered stretch occupies residues 44-82 (SLTSRSHTQEEMVQPNNISPNTYVENGHTPISQPTTEKL). The segment covering 57-81 (QPNNISPNTYVENGHTPISQPTTEK) has biased composition (polar residues).

It belongs to the ZipA family. In terms of assembly, interacts with FtsZ via their C-terminal domains.

The protein localises to the cell inner membrane. Its function is as follows. Essential cell division protein that stabilizes the FtsZ protofilaments by cross-linking them and that serves as a cytoplasmic membrane anchor for the Z ring. Also required for the recruitment to the septal ring of downstream cell division proteins. This Haemophilus influenzae (strain PittGG) protein is Cell division protein ZipA.